The chain runs to 64 residues: Long neurotoxin MS5 (64 aa).

5 disulfide bridges follow: Cys-3/Cys-24, Cys-6/Cys-11, Cys-17/Cys-41, Cys-45/Cys-57, and Cys-58/Cys-63.

It belongs to the three-finger toxin family. Ancestral subfamily. As to expression, expressed by the venom gland.

The protein localises to the secreted. Functionally, produces peripheral paralysis by blocking neuromuscular transmission at the postsynaptic site. Very weak inhibitor of the endogenous nicotinic acetylcholine receptors (nAChR) in the human rhabdomyosarcoma TE 671 cell line. This neurotoxin is lethal to zebrafish by injection at the back of the dorsolateral region, but is not toxic to mice by intraperitoneal injection. This is Long neurotoxin MS5 from Micrurus surinamensis (Surinam coral snake).